We begin with the raw amino-acid sequence, 480 residues long: Probable glycosyltransferase At5g25310 (480 aa).

At 1–10 the chain is on the cytoplasmic side; it reads MDKFQSKFTR. The chain crosses the membrane as a helical; Signal-anchor for type II membrane protein span at residues 11–31; it reads FGFISICFGSIALVLLISHCS. Residues 32–480 lie on the Lumenal side of the membrane; the sequence is TSFFDYSFQK…WLRRLNLKLT (449 aa). 5 N-linked (GlcNAc...) asparagine glycosylation sites follow: asparagine 85, asparagine 120, asparagine 243, asparagine 271, and asparagine 281.

The protein belongs to the glycosyltransferase 47 family.

The protein localises to the golgi apparatus membrane. Its function is as follows. May be involved in cell wall biosynthesis. The sequence is that of Probable glycosyltransferase At5g25310 from Arabidopsis thaliana (Mouse-ear cress).